We begin with the raw amino-acid sequence, 622 residues long: Dynein axonemal assembly factor 1 (622 aa).

Residues 1-11 show a composition bias toward polar residues; that stretch reads MHPEVSEQQAD. Positions 1 to 80 are disordered; it reads MHPEVSEQQA…ARNDRDDRGP (80 aa). Positions 32–42 are enriched in basic and acidic residues; that stretch reads VRKEEINETKE. Over residues 48–59 the composition is skewed to low complexity; it reads STTSCQSQKQQS. Residues 62–80 are compositionally biased toward basic and acidic residues; that stretch reads SRLDCRSGYARNDRDDRGP. LRR repeat units follow at residues 101 to 123, 124 to 145, 146 to 167, 168 to 189, 190 to 211, and 215 to 236; these read ALND…EEYT, GLRC…QAQS, ELRC…EPLQ, KLDA…SCLP, VLNT…QHLR, and RLCV…SVLE. In terms of domain architecture, LRRCT spans 249–288; it reads NPVTKHIPNYRRTVTVRLKQLTYLDDRPVFPKDRACAEAW. Basic and acidic residues predominate over residues 326-336; it reads EERKKARDKGE. Disordered regions lie at residues 326 to 360 and 399 to 431; these read EERK…PLGE and EEPD…TDGT. Low complexity-rich tracts occupy residues 337-351 and 415-428; these read TPLP…TSPE and VATA…VAAT. Phosphoserine is present on Ser349. A phosphoserine mark is found at Ser464 and Ser487. Disordered stretches follow at residues 480–503 and 525–622; these read ISSL…EHTP and RVPL…FGLD. The span at 539–550 shows a compositional bias: polar residues; it reads APETQGQVFSTT.

The protein belongs to the DNAAF1 family.

Its subcellular location is the cell projection. The protein localises to the cilium. In terms of biological role, cilium-specific protein required for the stability of the ciliary architecture. Plays a role in cytoplasmic preassembly of dynein arms. Involved in regulation of microtubule-based cilia and actin-based brush border microvilli. This chain is Dynein axonemal assembly factor 1 (Dnaaf1), found in Peromyscus polionotus (Oldfield mouse).